We begin with the raw amino-acid sequence, 291 residues long: 4-diphosphocytidyl-2-C-methyl-D-erythritol kinase (291 aa).

The active site involves Lys11. Position 95–105 (95–105) interacts with ATP; it reads PVAAGMAGGSS. The active site involves Asp137.

The protein belongs to the GHMP kinase family. IspE subfamily.

It catalyses the reaction 4-CDP-2-C-methyl-D-erythritol + ATP = 4-CDP-2-C-methyl-D-erythritol 2-phosphate + ADP + H(+). The protein operates within isoprenoid biosynthesis; isopentenyl diphosphate biosynthesis via DXP pathway; isopentenyl diphosphate from 1-deoxy-D-xylulose 5-phosphate: step 3/6. Its function is as follows. Catalyzes the phosphorylation of the position 2 hydroxy group of 4-diphosphocytidyl-2C-methyl-D-erythritol. The protein is 4-diphosphocytidyl-2-C-methyl-D-erythritol kinase of Lachnoclostridium phytofermentans (strain ATCC 700394 / DSM 18823 / ISDg) (Clostridium phytofermentans).